Consider the following 314-residue polypeptide: tRNA-cytidine(32) 2-sulfurtransferase (314 aa).

Positions 53-58 (SGGKDS) match the PP-loop motif motif. [4Fe-4S] cluster contacts are provided by C128, C131, and C219.

The protein belongs to the TtcA family. In terms of assembly, homodimer. Mg(2+) is required as a cofactor. It depends on [4Fe-4S] cluster as a cofactor.

Its subcellular location is the cytoplasm. The enzyme catalyses cytidine(32) in tRNA + S-sulfanyl-L-cysteinyl-[cysteine desulfurase] + AH2 + ATP = 2-thiocytidine(32) in tRNA + L-cysteinyl-[cysteine desulfurase] + A + AMP + diphosphate + H(+). The protein operates within tRNA modification. Its function is as follows. Catalyzes the ATP-dependent 2-thiolation of cytidine in position 32 of tRNA, to form 2-thiocytidine (s(2)C32). The sulfur atoms are provided by the cysteine/cysteine desulfurase (IscS) system. This chain is tRNA-cytidine(32) 2-sulfurtransferase, found in Colwellia psychrerythraea (strain 34H / ATCC BAA-681) (Vibrio psychroerythus).